Here is a 446-residue protein sequence, read N- to C-terminus: Putrescine N-hydroxylase (446 aa).

FAD is bound by residues F17, D37, S38, K39, W44, and H45. 3 residues coordinate NADP(+): T54, Q56, and R98. Q56 provides a ligand contact to FAD. Residue V121 coordinates FAD. Positions 199, 223, 267, and 301 each coordinate NADP(+). Positions 378, 389, and 391 each coordinate FAD.

It belongs to the lysine N(6)-hydroxylase/L-ornithine N(5)-oxygenase family. As to quaternary structure, homotetramer. FAD is required as a cofactor.

It catalyses the reaction putrescine + NADPH + O2 = N-hydroxyputrescine + NADP(+) + H2O. It functions in the pathway siderophore biosynthesis. N-hydroxylating monooxygenase involved in the biosynthesis of fimsbactin A, the major siderophore produced by A.baumannii. Catalyzes the N-hydroxylation of the aliphatic diamine putrescine into N-hydroxyputrescine (NHP). Putrescine is the preferred substrate, but the enzyme can also catalyze the N-hydroxylation of cadaverine, with 4-fold lower catalytic efficiency. Cannot use lysine or ornithine as substrates. Uses both NADPH and NADH as the reducing cofactor with a preference for NADPH. This chain is Putrescine N-hydroxylase, found in Acinetobacter baumannii (strain ATCC 17978 / DSM 105126 / CIP 53.77 / LMG 1025 / NCDC KC755 / 5377).